Here is a 155-residue protein sequence, read N- to C-terminus: Anaerobic ribonucleoside-triphosphate reductase-activating protein (155 aa).

3 residues coordinate [4Fe-4S] cluster: cysteine 26, cysteine 30, and cysteine 33. Residues 32–34 (GCY) and glycine 74 contribute to the S-adenosyl-L-methionine site.

Belongs to the organic radical-activating enzymes family. In terms of assembly, forms a tetramer composed of two NrdD and two NrdG subunits. [4Fe-4S] cluster is required as a cofactor.

The protein localises to the cytoplasm. The enzyme catalyses glycyl-[protein] + reduced [flavodoxin] + S-adenosyl-L-methionine = glycin-2-yl radical-[protein] + semiquinone [flavodoxin] + 5'-deoxyadenosine + L-methionine + H(+). Functionally, activation of anaerobic ribonucleoside-triphosphate reductase under anaerobic conditions by generation of an organic free radical, using S-adenosylmethionine and reduced flavodoxin as cosubstrates to produce 5'-deoxy-adenosine. The chain is Anaerobic ribonucleoside-triphosphate reductase-activating protein (nrdG) from Haemophilus influenzae (strain ATCC 51907 / DSM 11121 / KW20 / Rd).